Consider the following 293-residue polypeptide: DDRGK domain-containing protein 1 (293 aa).

The Lumenal segment spans residues 1-6 (MWGPLI). The chain crosses the membrane as a helical span at residues 7 to 27 (YALLGLAIVAAAFLFVRRSQA). Residues 28–293 (KEVVPVADDD…PADVDETTTA (266 aa)) are Cytoplasmic-facing. Disordered stretches follow at residues 30 to 151 (VVPV…RQKE) and 273 to 293 (TDVEFPGDEPAPADVDETTTA). 2 stretches are compositionally biased toward basic and acidic residues: residues 90–126 (KLQEKEERRRRNEEMAQAREQAKLLQHQEEEERKERE) and 133–151 (ERQREAELEREREAQRQKE).

This sequence belongs to the DDRGK1 family.

The protein resides in the endoplasmic reticulum membrane. Its function is as follows. Substrate adapter for ufmylation, the covalent attachment of the ubiquitin-like modifier UFM1 to substrate proteins. This chain is DDRGK domain-containing protein 1, found in Monosiga brevicollis (Choanoflagellate).